The chain runs to 326 residues: Phospho-N-acetylmuramoyl-pentapeptide-transferase (326 aa).

Helical transmembrane passes span 2 to 22 (ILATKVFFTSFVFGFILFPYF), 51 to 71 (VPPMGGIIILISSLLPILLWA), 73 to 93 (LTPEILLLILITLFFALLGFI), 113 to 133 (ILIQFIVALVGVFILKLYSAE), 143 to 163 (GVIIDFGYLYVPFAAFVIVGS), 175 to 195 (GLAATQVITSFAFLGLIAYIT), 199 to 219 (MNITLFCIAFIGAILSFLWFN), 225 to 245 (IFMGDVGSLSVGAALGLTSVL), 250 to 270 (MLFAIIGIIFVIETLSVIIQI), and 305 to 325 (VIVMKFWIISIICSVFTITFL).

Belongs to the glycosyltransferase 4 family. MraY subfamily. Requires Mg(2+) as cofactor.

It localises to the cell membrane. The enzyme catalyses UDP-N-acetyl-alpha-D-muramoyl-L-alanyl-gamma-D-glutamyl-meso-2,6-diaminopimeloyl-D-alanyl-D-alanine + di-trans,octa-cis-undecaprenyl phosphate = di-trans,octa-cis-undecaprenyl diphospho-N-acetyl-alpha-D-muramoyl-L-alanyl-D-glutamyl-meso-2,6-diaminopimeloyl-D-alanyl-D-alanine + UMP. It participates in cell wall biogenesis; peptidoglycan biosynthesis. Its function is as follows. Catalyzes the initial step of the lipid cycle reactions in the biosynthesis of the cell wall peptidoglycan: transfers peptidoglycan precursor phospho-MurNAc-pentapeptide from UDP-MurNAc-pentapeptide onto the lipid carrier undecaprenyl phosphate, yielding undecaprenyl-pyrophosphoryl-MurNAc-pentapeptide, known as lipid I. This chain is Phospho-N-acetylmuramoyl-pentapeptide-transferase, found in Wolbachia pipientis wMel.